A 312-amino-acid chain; its full sequence is Ribonuclease Z (312 aa).

Zn(2+) is bound by residues His62, His64, Asp66, His67, His144, Asp215, and His273. Catalysis depends on Asp66, which acts as the Proton acceptor.

The protein belongs to the RNase Z family. As to quaternary structure, homodimer. Requires Zn(2+) as cofactor.

The catalysed reaction is Endonucleolytic cleavage of RNA, removing extra 3' nucleotides from tRNA precursor, generating 3' termini of tRNAs. A 3'-hydroxy group is left at the tRNA terminus and a 5'-phosphoryl group is left at the trailer molecule.. Its function is as follows. Zinc phosphodiesterase, which displays some tRNA 3'-processing endonuclease activity. Probably involved in tRNA maturation, by removing a 3'-trailer from precursor tRNA. This Prochlorococcus marinus (strain MIT 9312) protein is Ribonuclease Z.